The following is an 87-amino-acid chain: MYTSASLFFIQIVISIFNSHLAVLYSIALCYSVQGRILGSSTTNFVHDSTIGVKSSWSRHLIHGINIFSFSISLFLIFLTIPLFDIG.

The next 2 membrane-spanning stretches (helical) occupy residues 7–27 and 64–84; these read LFFI…LYSI and GINI…IPLF.

It localises to the membrane. This is an uncharacterized protein from Schizosaccharomyces pombe (strain 972 / ATCC 24843) (Fission yeast).